The following is a 214-amino-acid chain: Orotate phosphoribosyltransferase (214 aa).

Lys-26 serves as a coordination point for 5-phospho-alpha-D-ribose 1-diphosphate. 34-35 (FF) provides a ligand contact to orotate. 5-phospho-alpha-D-ribose 1-diphosphate contacts are provided by residues 72–73 (YK), Arg-99, Lys-100, Lys-103, His-105, and 124–132 (DDVITAGTA). Orotate contacts are provided by Thr-128 and Arg-156.

This sequence belongs to the purine/pyrimidine phosphoribosyltransferase family. PyrE subfamily. As to quaternary structure, homodimer. It depends on Mg(2+) as a cofactor.

The enzyme catalyses orotidine 5'-phosphate + diphosphate = orotate + 5-phospho-alpha-D-ribose 1-diphosphate. The protein operates within pyrimidine metabolism; UMP biosynthesis via de novo pathway; UMP from orotate: step 1/2. Functionally, catalyzes the transfer of a ribosyl phosphate group from 5-phosphoribose 1-diphosphate to orotate, leading to the formation of orotidine monophosphate (OMP). The chain is Orotate phosphoribosyltransferase from Mannheimia succiniciproducens (strain KCTC 0769BP / MBEL55E).